A 1598-amino-acid polypeptide reads, in one-letter code: MSSRRSVKRSLVLDDDDDEDIFYNFKVLLPNGTSVKLTLKNPEPEISMQSFVNLVKKEYDNARKDCLLMSKRMKVDWNSGGKFHLESNGGKMKGIVRFAAFKPDLCHIIRLDDGSGIASTMYENLWDLTPDTDLLKELPENYSFETALADLIDNSLQAVWPYREGARKLISVDISGDHITVFDTGRGMDSSEGNSIDKWGKIGASLHRSQKTGAIGGNPPYLKPYFGMFGYGGPYASMFLGRCDFSFCLPILICIVLLRLTLFSVRRTLVSSKTKESKKVFTLQFKKEALIDNRSIVGKNWKTDGGMRDPSEEEMKLSPHGSFTKVEIFESEFDISKIYQLQCRLKDIYFPYIQFCLATIFLCDELSKTGRTERPVAFQVNGEDLAEIAGGEVAITNLHSKGQFFSFQIRFTLFGGKRKGTAQEANARLKFVYFPIVQGKESIEKILQSLEEEGCKVSESFQTFGRVSLRRLGRLLPEVRWDSIPFMQRGNRASTLQKSCRRVKCFVDLDAGFSPTPSKTDLASQNPFSVALRNFGSKSTEKEKDDDVNIVIHREGKSVSYAHLEEKYQEWVLEMHNTHDEEAASGLDEAVLIVGSLDKKALGILRDAVRVHKEVRRKEKTWKRGQNIKILRGAYAGIHNNNVYATIDYFLIEGFEDEAGGDTRILCRPIDRPENEGCKLSIIDGISKLEVQSSLSLPITIIDSGKCLPVDANEWNRKLDKQQEKAPSKIDLLDERDCRELKIDGELPIGNSVRAGKAPPKQIVAVVRPACFTSLTPSKKLDQKNIVKMDGEEMVMVVKLKSSDKNISSQRLFPTSRKGISGLYIFSLGSKFPNLFKKAGTYNFSFSIGNSIKCNKTVVVRPSSKAARWELDDNLESLPCNVRVGSSLPPFRIACFDKYKNKIPFTSVPSLEVELEASPGFLIKIDKLETNLINDGLILKIENMLVETDELDQIRPNYEATLEIRAMDNPFSVSVPCKVNPGPLKRVAVNNPKALENLLPDSTVEDFILELFDGYNNHVAEGTDVLIHIDGYRIEDWMGINRKVDSRGCINLSGILKVTEGYGKSVSLSVMSGNEVIFCKESQIDERQLRLVTELPDCCTAGTNLMNLIFQVTELDGSLDTSIHHDEKSGCFHTMSIESDSSSVESAIRYAFVHGSCKVSSLSLPENEGVFSCRVFHSRYPELQMSIKIQVTSAPTSEREESGYSTPHSKTTPPPESGIPSITNPWPTPCSQFGVLAIRSSSLALSSETSLMDMAQYTEDLKEKINIDEERRVELEERLKCLQAQREHAEQECSRLQASLEPLGAPFPECLSTKESMMKQIEEKHHDTAASVFCCLYRKAPPPRSLFLSQKGMFGVVALLGSVASTSLSRVLSEYLGKDTMLSLVCKSSQFGPKSDEYRKFQSEAASLGRSITNRFLVICLDATRPWRNGLVRNDPQKRLAMDNPYLPNGDPIPGFKGYAVNMIDLASEELDIQSSSGYGLRETLFYGVFRELQVYETAEHLEAALPHINGGDAVSLDGVIARENGFIYSGCCTPEVHFPITVTERQEKALVQLEITRDKKRKTEEMMTEENRSLRRLVKKLKKANEKYQNFTAMADS.

Residues 1191-1218 are disordered; it reads VTSAPTSEREESGYSTPHSKTTPPPESG. Coiled coils occupy residues 1258-1301 and 1565-1595; these read TEDL…ASLE and EEMMTEENRSLRRLVKKLKKANEKYQNFTAM.

In terms of tissue distribution, highly expressed in closed buds and open flowers. Expressed at low levels in roots, stems, cauline leaves and siliques. Expressed in the region of the shoot and floral meristems.

It is found in the nucleus. Functionally, contributes to DNA double-strand break (DSB) repair via somatic homologous recombination. Functions downstream of ATM. The polypeptide is Structural maintenance of chromosomes flexible hinge domain-containing protein GMI1 (Arabidopsis thaliana (Mouse-ear cress)).